The sequence spans 351 residues: Nicotinate-nucleotide--dimethylbenzimidazole phosphoribosyltransferase (351 aa).

Glutamate 317 acts as the Proton acceptor in catalysis.

The protein belongs to the CobT family.

It catalyses the reaction 5,6-dimethylbenzimidazole + nicotinate beta-D-ribonucleotide = alpha-ribazole 5'-phosphate + nicotinate + H(+). It participates in nucleoside biosynthesis; alpha-ribazole biosynthesis; alpha-ribazole from 5,6-dimethylbenzimidazole: step 1/2. Functionally, catalyzes the synthesis of alpha-ribazole-5'-phosphate from nicotinate mononucleotide (NAMN) and 5,6-dimethylbenzimidazole (DMB). This Pseudomonas aeruginosa (strain ATCC 15692 / DSM 22644 / CIP 104116 / JCM 14847 / LMG 12228 / 1C / PRS 101 / PAO1) protein is Nicotinate-nucleotide--dimethylbenzimidazole phosphoribosyltransferase.